A 490-amino-acid polypeptide reads, in one-letter code: Aspartyl/glutamyl-tRNA(Asn/Gln) amidotransferase subunit B (490 aa).

It belongs to the GatB/GatE family. GatB subfamily. In terms of assembly, heterotrimer of A, B and C subunits.

The enzyme catalyses L-glutamyl-tRNA(Gln) + L-glutamine + ATP + H2O = L-glutaminyl-tRNA(Gln) + L-glutamate + ADP + phosphate + H(+). It carries out the reaction L-aspartyl-tRNA(Asn) + L-glutamine + ATP + H2O = L-asparaginyl-tRNA(Asn) + L-glutamate + ADP + phosphate + 2 H(+). Its function is as follows. Allows the formation of correctly charged Asn-tRNA(Asn) or Gln-tRNA(Gln) through the transamidation of misacylated Asp-tRNA(Asn) or Glu-tRNA(Gln) in organisms which lack either or both of asparaginyl-tRNA or glutaminyl-tRNA synthetases. The reaction takes place in the presence of glutamine and ATP through an activated phospho-Asp-tRNA(Asn) or phospho-Glu-tRNA(Gln). This is Aspartyl/glutamyl-tRNA(Asn/Gln) amidotransferase subunit B from Prochlorococcus marinus (strain AS9601).